We begin with the raw amino-acid sequence, 229 residues long: Thymidylate kinase (229 aa).

Residue 9–16 (GPEGSGKS) participates in ATP binding.

The protein belongs to the thymidylate kinase family.

It catalyses the reaction dTMP + ATP = dTDP + ADP. Functionally, phosphorylation of dTMP to form dTDP in both de novo and salvage pathways of dTTP synthesis. This chain is Thymidylate kinase, found in Roseiflexus castenholzii (strain DSM 13941 / HLO8).